The following is a 133-amino-acid chain: Small ribosomal subunit protein uS8 (133 aa).

This sequence belongs to the universal ribosomal protein uS8 family. In terms of assembly, part of the 30S ribosomal subunit.

In terms of biological role, one of the primary rRNA binding proteins, it binds directly to 16S rRNA central domain where it helps coordinate assembly of the platform of the 30S subunit. This Saccharolobus islandicus (strain L.S.2.15 / Lassen #1) (Sulfolobus islandicus) protein is Small ribosomal subunit protein uS8.